A 144-amino-acid polypeptide reads, in one-letter code: Monooxygenase ptaG (144 aa).

Belongs to the avfA family.

The protein operates within secondary metabolite biosynthesis. Its function is as follows. Monooxygenase; part of the gene cluster that mediates the biosynthesis of pestheic acid, a diphenyl ether which is a biosynthetic precursor of the unique chloropupukeananes. The biosynthesis initiates from condensation of acetate and malonate units catalyzed by the non-reducing PKS ptaA. As the ptaA protein is TE/CLC domain-deficient, hydrolysis and Claisen cyclization of the polyketide could be catalyzed by ptaB containing a beta-lactamase domain. The ptaB protein might hydrolyze the thioester bond between the ACP of ptaA and the intermediate to release atrochrysone carboxylic acid, which is spontaneously dehydrated to form endocrocin anthrone. Endocrocin anthrone is then converted to endocrocin, catalyzed by the anthrone oxygenase ptaC. Spontaneous decarboxylation of endocrocin occurs to generate emodin. An O-methyltransferase (ptaH or ptaI) could methylate emodin to form physcion. PtaJ could then catalyze the oxidative cleavage of physcion, and rotation of the intermediate could then afford desmethylisosulochrin. PtaF, a putative NADH-dependent oxidoreductase, might also participate in the oxidative cleavage step. Desmethylisosulochrin is then transformed by another O-methyltransferase (ptaH or ptaI) to form isosulochrin. Chlorination of isosulochrin by ptaM in the cyclohexadienone B ring then produces chloroisosulochrin. PtaE is responsible for the oxidative coupling reactions of both benzophenones isosulochrin and chloroisosulochrin to RES-1214-1 and pestheic acid respectively, regardless of chlorination. The polypeptide is Monooxygenase ptaG (Pestalotiopsis fici (strain W106-1 / CGMCC3.15140)).